Reading from the N-terminus, the 473-residue chain is PEP-dependent dihydroxyacetone kinase, phosphoryl donor subunit DhaM (473 aa).

A PTS EIIA type-4 domain is found at 1–137; the sequence is MVNLVIVSHS…LAAKQAQLGI (137 aa). H9 (tele-phosphohistidine intermediate) is an active-site residue. The region spanning 155-242 is the HPr domain; the sequence is ARSVTVTIRN…SLAAEDFGEH (88 aa). The active-site Pros-phosphohistidine intermediate is the H169. The interval 266 to 472 is PTS EI-like, N-terminal part; it reads PLPLAQPARH…IDPAAQRVSC (207 aa). The active-site Tele-phosphohistidine intermediate is the H432.

The protein belongs to the PEP-utilizing enzyme family. Homodimer. The dihydroxyacetone kinase complex is composed of a homodimer of DhaM, a homodimer of DhaK and the subunit DhaL.

The catalysed reaction is dihydroxyacetone + phosphoenolpyruvate = dihydroxyacetone phosphate + pyruvate. Its function is as follows. Component of the dihydroxyacetone kinase complex, which is responsible for the phosphoenolpyruvate (PEP)-dependent phosphorylation of dihydroxyacetone. DhaM serves as the phosphoryl donor. Is phosphorylated by phosphoenolpyruvate in an EI- and HPr-dependent reaction, and a phosphorelay system on histidine residues finally leads to phosphoryl transfer to DhaL and dihydroxyacetone. The chain is PEP-dependent dihydroxyacetone kinase, phosphoryl donor subunit DhaM from Pantoea ananatis (strain LMG 20103).